We begin with the raw amino-acid sequence, 362 residues long: G-protein coupled receptor homolog US27 (362 aa).

The Virion surface segment spans residues 1-34; sequence MTTSTNNQTLTQVSNMTNHTLNSTEIYQLFEYTR. Asparagine 7, asparagine 15, asparagine 18, and asparagine 22 each carry an N-linked (GlcNAc...) asparagine; by host glycan. The helical transmembrane segment at 35–58 threads the bilayer; that stretch reads LGVWLMCIVGTFLNVLVITTILYY. The Intravirion portion of the chain corresponds to 59 to 67; the sequence is RRKKKSPSD. A helical membrane pass occupies residues 68-90; the sequence is TYICNLAVADLLIVVGLPFFLEY. The Virion surface segment spans residues 91–104; it reads AKHHPKLSREVVCS. A helical membrane pass occupies residues 105–126; that stretch reads GLNACFYICLFAGVCFLINLSM. At 127–148 the chain is on the intravirion side; the sequence is DRYCVIVWGVELNRVRNNKRAT. Residues 149–167 form a helical membrane-spanning segment; it reads CWVVIFWILAVLMGMPHYL. Topologically, residues 168 to 193 are virion surface; sequence MYSHTNNECVGEFANETSGWFPVFLN. A helical membrane pass occupies residues 194–213; the sequence is TKVNICGYLAPIALMAYTYN. Residues 214 to 233 are Intravirion-facing; sequence RMVRFIINYVGKWHMQTLHV. A helical membrane pass occupies residues 234–257; it reads LLVVVVSFASFWFPFNLALFLESI. Residues 258–274 are Virion surface-facing; it reads RLLAGVYNDTLQNVIIF. The helical transmembrane segment at 275–298 threads the bilayer; sequence CLYVGQFLAYVRACLNPGIYILVG. Residues 299–362 are Intravirion-facing; sequence TQMRKDMWTT…MESGEEEFLL (64 aa). The disordered stretch occupies residues 341–362; it reads TKRTHYDRKNAPMESGEEEFLL.

The protein belongs to the G-protein coupled receptor 1 family. As to quaternary structure, heterodimer with US28. Interacts with host Gi alpha-1 subunit GNAI1; this interaction does not lead to the catalytic activation of Gi complex.

It is found in the virion. The protein resides in the host cell membrane. Its function is as follows. Interacts with the host Gi complex without activating it, thereby probably interfering with the chemokine-Gi signaling. May also function as a G protein sink to sequester G protein from the cell surface via internalization. Plays an important role in spread of HCMV via the extracellular route. This Homo sapiens (Human) protein is G-protein coupled receptor homolog US27 (US27).